The primary structure comprises 284 residues: Tropomyosin (284 aa).

Positions 1-273 (MDAIKKKMLA…KEKYKAISDE (273 aa)) form a coiled coil.

Belongs to the tropomyosin family. Homodimer.

Tropomyosin, in association with the troponin complex, plays a central role in the calcium dependent regulation of muscle contraction. In Haliotis diversicolor (Abalone), this protein is Tropomyosin.